We begin with the raw amino-acid sequence, 307 residues long: Stage III sporulation protein AA (307 aa).

143 to 150 (GPPQTGKT) provides a ligand contact to ATP.

The protein is Stage III sporulation protein AA (spoIIIAA) of Bacillus subtilis (strain 168).